We begin with the raw amino-acid sequence, 605 residues long: DNA mismatch repair protein MutL (605 aa).

It belongs to the DNA mismatch repair MutL/HexB family.

Its function is as follows. This protein is involved in the repair of mismatches in DNA. It is required for dam-dependent methyl-directed DNA mismatch repair. May act as a 'molecular matchmaker', a protein that promotes the formation of a stable complex between two or more DNA-binding proteins in an ATP-dependent manner without itself being part of a final effector complex. This is DNA mismatch repair protein MutL from Rhizobium meliloti (strain 1021) (Ensifer meliloti).